A 64-amino-acid polypeptide reads, in one-letter code: Disintegrin schistatin (64 aa).

One can recognise a Disintegrin domain in the interval N1–V64. 4 disulfide bridges follow: C6–C29, C20–C26, C25–C50, and C38–C57. The short motif at R42–D44 is the Cell attachment site element.

This sequence belongs to the disintegrin family. Dimeric disintegrin subfamily. Homodimer; disulfide-linked. As to expression, expressed by the venom gland.

It localises to the secreted. Its function is as follows. May bind to both alpha-IIb/beta-3 (ITGA2B/ITGB3) and alpha-V/beta-3 (ITGAV/ITGB3) integrins, and may inhibit platelet aggregation. This Echis carinatus (Saw-scaled viper) protein is Disintegrin schistatin.